A 419-amino-acid polypeptide reads, in one-letter code: Endothiapepsin (419 aa).

The N-terminal stretch at 1 to 20 (MSSPLKNALVTAMLAGGALS) is a signal peptide. The propeptide at 21–89 (SPTKQHVGIP…QNSTSGLAER (69 aa)) is activation peptide. Residues 106-417 (YITPVQIGTP…GATTPTLGFA (312 aa)) form the Peptidase A1 domain. Catalysis depends on residues D124 and S288. Cysteines 344 and 379 form a disulfide.

It belongs to the peptidase A1 family.

It catalyses the reaction Hydrolysis of proteins with specificity similar to that of pepsin A, prefers hydrophobic residues at P1 and P1', but does not cleave 14-Ala-|-Leu-15 in the B chain of insulin or Z-Glu-Tyr. Clots milk.. The sequence is that of Endothiapepsin (EAPA) from Cryphonectria parasitica (Chestnut blight fungus).